Reading from the N-terminus, the 333-residue chain is Foldase protein PrsA (333 aa).

A signal peptide spans 1-22 (MKSAKQIATALLVGMFTFSAVG). The N-palmitoyl cysteine moiety is linked to residue C23. C23 is lipidated: S-diacylglycerol cysteine. The region spanning 192–283 (PNTVHLAHIL…FGWHVIKCIK (92 aa)) is the PpiC domain.

It belongs to the PrsA family.

The protein resides in the cell membrane. The enzyme catalyses [protein]-peptidylproline (omega=180) = [protein]-peptidylproline (omega=0). In terms of biological role, plays a major role in protein secretion by helping the post-translocational extracellular folding of several secreted proteins. This chain is Foldase protein PrsA, found in Clostridium acetobutylicum (strain ATCC 824 / DSM 792 / JCM 1419 / IAM 19013 / LMG 5710 / NBRC 13948 / NRRL B-527 / VKM B-1787 / 2291 / W).